Consider the following 482-residue polypeptide: 23S rRNA (uracil(1939)-C(5))-methyltransferase RlmD (482 aa).

The segment at 1–33 is disordered; the sequence is MANLFKQSRAKQKNKTTPSQTQTSTKGSARANA. Residues 15–28 show a composition bias toward low complexity; it reads KTTPSQTQTSTKGS. In terms of domain architecture, TRAM spans 51 to 108; that stretch reads TAQDANNNAITIQELDWMGQGVARGATMYFVEGALPGETCDIEVVSSKKKVVSAKTIS. [4Fe-4S] cluster contacts are provided by Cys121, Cys127, Cys130, and Cys208. S-adenosyl-L-methionine-binding residues include Gln313, Phe342, Asn347, Glu363, Asp390, and Asp411. Residue Cys437 is the Nucleophile of the active site.

Belongs to the class I-like SAM-binding methyltransferase superfamily. RNA M5U methyltransferase family. RlmD subfamily.

It carries out the reaction uridine(1939) in 23S rRNA + S-adenosyl-L-methionine = 5-methyluridine(1939) in 23S rRNA + S-adenosyl-L-homocysteine + H(+). Functionally, catalyzes the formation of 5-methyl-uridine at position 1939 (m5U1939) in 23S rRNA. This is 23S rRNA (uracil(1939)-C(5))-methyltransferase RlmD from Alteromonas mediterranea (strain DSM 17117 / CIP 110805 / LMG 28347 / Deep ecotype).